A 259-amino-acid chain; its full sequence is Pyrroloquinoline-quinone synthase (259 aa).

It belongs to the PqqC family.

The catalysed reaction is 6-(2-amino-2-carboxyethyl)-7,8-dioxo-1,2,3,4,7,8-hexahydroquinoline-2,4-dicarboxylate + 3 O2 = pyrroloquinoline quinone + 2 H2O2 + 2 H2O + H(+). The protein operates within cofactor biosynthesis; pyrroloquinoline quinone biosynthesis. Functionally, ring cyclization and eight-electron oxidation of 3a-(2-amino-2-carboxyethyl)-4,5-dioxo-4,5,6,7,8,9-hexahydroquinoline-7,9-dicarboxylic-acid to PQQ. This Bradyrhizobium sp. (strain ORS 278) protein is Pyrroloquinoline-quinone synthase.